The following is a 125-amino-acid chain: Small ribosomal subunit protein uS13 (125 aa).

Residues 97 to 125 (PLRGQRTKTNARTRKGKRKTVANKKMASK) form a disordered region.

The protein belongs to the universal ribosomal protein uS13 family. As to quaternary structure, part of the 30S ribosomal subunit. Forms a loose heterodimer with protein S19. Forms two bridges to the 50S subunit in the 70S ribosome.

Its function is as follows. Located at the top of the head of the 30S subunit, it contacts several helices of the 16S rRNA. In the 70S ribosome it contacts the 23S rRNA (bridge B1a) and protein L5 of the 50S subunit (bridge B1b), connecting the 2 subunits; these bridges are implicated in subunit movement. Contacts the tRNAs in the A and P-sites. This is Small ribosomal subunit protein uS13 from Borrelia hermsii (strain HS1 / DAH).